Consider the following 294-residue polypeptide: 4-hydroxy-tetrahydrodipicolinate synthase (294 aa).

Threonine 44 lines the pyruvate pocket. Tyrosine 132 (proton donor/acceptor) is an active-site residue. Lysine 160 acts as the Schiff-base intermediate with substrate in catalysis. Residue isoleucine 205 coordinates pyruvate.

The protein belongs to the DapA family. As to quaternary structure, homotetramer; dimer of dimers.

It localises to the cytoplasm. It carries out the reaction L-aspartate 4-semialdehyde + pyruvate = (2S,4S)-4-hydroxy-2,3,4,5-tetrahydrodipicolinate + H2O + H(+). It participates in amino-acid biosynthesis; L-lysine biosynthesis via DAP pathway; (S)-tetrahydrodipicolinate from L-aspartate: step 3/4. Its function is as follows. Catalyzes the condensation of (S)-aspartate-beta-semialdehyde [(S)-ASA] and pyruvate to 4-hydroxy-tetrahydrodipicolinate (HTPA). The polypeptide is 4-hydroxy-tetrahydrodipicolinate synthase (Kosmotoga olearia (strain ATCC BAA-1733 / DSM 21960 / TBF 19.5.1)).